Consider the following 354-residue polypeptide: Uroporphyrinogen decarboxylase (354 aa).

Substrate contacts are provided by residues 30–34 (RQAGR), Asp-79, Tyr-154, Ser-209, and His-333.

The protein belongs to the uroporphyrinogen decarboxylase family. Homodimer.

It localises to the cytoplasm. It carries out the reaction uroporphyrinogen III + 4 H(+) = coproporphyrinogen III + 4 CO2. Its pathway is porphyrin-containing compound metabolism; protoporphyrin-IX biosynthesis; coproporphyrinogen-III from 5-aminolevulinate: step 4/4. In terms of biological role, catalyzes the decarboxylation of four acetate groups of uroporphyrinogen-III to yield coproporphyrinogen-III. In Mycobacterium sp. (strain JLS), this protein is Uroporphyrinogen decarboxylase.